The primary structure comprises 515 residues: Endoglucanase 2 (515 aa).

An N-terminal signal peptide occupies residues M1–T31. The N-linked (GlcNAc...) asparagine glycan is linked to N37. The active-site Nucleophile is D100. N250 is a glycosylation site (N-linked (GlcNAc...) asparagine). H433 is an active-site residue. Residue N475 is glycosylated (N-linked (GlcNAc...) asparagine). D480 is an active-site residue. A glycan (N-linked (GlcNAc...) asparagine) is linked at N483. E489 is a catalytic residue.

It belongs to the glycosyl hydrolase 9 (cellulase E) family.

It is found in the secreted. It catalyses the reaction Endohydrolysis of (1-&gt;4)-beta-D-glucosidic linkages in cellulose, lichenin and cereal beta-D-glucans.. This Arabidopsis thaliana (Mouse-ear cress) protein is Endoglucanase 2.